Reading from the N-terminus, the 695-residue chain is Elongation factor G (695 aa).

Residues Ser-5 to Thr-280 form the tr-type G domain. GTP-binding positions include Ala-14–Thr-21, Asp-78–His-82, and Asn-132–Asp-135. The segment at Pro-279–Val-299 is disordered.

Belongs to the TRAFAC class translation factor GTPase superfamily. Classic translation factor GTPase family. EF-G/EF-2 subfamily.

The protein resides in the cytoplasm. In terms of biological role, catalyzes the GTP-dependent ribosomal translocation step during translation elongation. During this step, the ribosome changes from the pre-translocational (PRE) to the post-translocational (POST) state as the newly formed A-site-bound peptidyl-tRNA and P-site-bound deacylated tRNA move to the P and E sites, respectively. Catalyzes the coordinated movement of the two tRNA molecules, the mRNA and conformational changes in the ribosome. In Alteromonas mediterranea (strain DSM 17117 / CIP 110805 / LMG 28347 / Deep ecotype), this protein is Elongation factor G.